Here is a 369-residue protein sequence, read N- to C-terminus: Peptide chain release factor 2 (369 aa).

The residue at position 250 (glutamine 250) is an N5-methylglutamine.

This sequence belongs to the prokaryotic/mitochondrial release factor family. In terms of processing, methylated by PrmC. Methylation increases the termination efficiency of RF2.

It localises to the cytoplasm. Peptide chain release factor 2 directs the termination of translation in response to the peptide chain termination codons UGA and UAA. This chain is Peptide chain release factor 2 (prfB), found in Rickettsia typhi (strain ATCC VR-144 / Wilmington).